The sequence spans 134 residues: Iron-sulfur cluster insertion protein ErpA (134 aa).

Cys47, Cys126, and Cys128 together coordinate iron-sulfur cluster.

It belongs to the HesB/IscA family. In terms of assembly, homodimer. Iron-sulfur cluster serves as cofactor.

Functionally, required for insertion of 4Fe-4S clusters for at least IspG. This Coxiella burnetii (strain Dugway 5J108-111) protein is Iron-sulfur cluster insertion protein ErpA.